We begin with the raw amino-acid sequence, 916 residues long: Isoleucine--tRNA ligase (916 aa).

A 'HIGH' region motif is present at residues 57-67; the sequence is PYANGNLHMGH. Glu-554 contacts L-isoleucyl-5'-AMP. A 'KMSKS' region motif is present at residues 595–599; that stretch reads KMSKS. Lys-598 lines the ATP pocket. Zn(2+)-binding residues include Cys-885, Cys-888, Cys-905, and Cys-908.

It belongs to the class-I aminoacyl-tRNA synthetase family. IleS type 1 subfamily. Monomer. Zn(2+) is required as a cofactor.

Its subcellular location is the cytoplasm. The catalysed reaction is tRNA(Ile) + L-isoleucine + ATP = L-isoleucyl-tRNA(Ile) + AMP + diphosphate. Functionally, catalyzes the attachment of isoleucine to tRNA(Ile). As IleRS can inadvertently accommodate and process structurally similar amino acids such as valine, to avoid such errors it has two additional distinct tRNA(Ile)-dependent editing activities. One activity is designated as 'pretransfer' editing and involves the hydrolysis of activated Val-AMP. The other activity is designated 'posttransfer' editing and involves deacylation of mischarged Val-tRNA(Ile). The polypeptide is Isoleucine--tRNA ligase (Staphylococcus haemolyticus (strain JCSC1435)).